The sequence spans 792 residues: Receptor-like protein 54 (792 aa).

The N-terminal stretch at 1–21 (MKSNLAVFFITCFFCCVFVTS) is a signal peptide. At 22–758 (DSVYTLPFPF…PKQEHALNWK (737 aa)) the chain is on the extracellular side. N-linked (GlcNAc...) asparagine glycans are attached at residues N68 and N107. LRR repeat units lie at residues 114-137 (QHLR…GFGR), 139-162 (TYLE…ISNL), 163-187 (SRLT…SLTL), 189-209 (ENID…LFTM), 211-233 (FLVS…NYSA), 235-258 (SKLL…ISKL), 259-282 (ANLI…FLLF), 283-302 (KSLV…GTGS), 303-324 (ENLT…FIKD), 325-349 (LQRL…LWTL), 351-374 (SMLH…IILN), and 375-399 (SSIS…PYVN). An N-linked (GlcNAc...) asparagine glycan is attached at N161. N-linked (GlcNAc...) asparagine glycosylation occurs at N230. N304 and N314 each carry an N-linked (GlcNAc...) asparagine glycan. 2 N-linked (GlcNAc...) asparagine glycosylation sites follow: N356 and N374. The stretch at 400 to 418 (IMAASNNYFTGGIPLIFCK) is one LRR 13; degenerate repeat. LRR repeat units lie at residues 419–443 (RYRL…LTNV), 444–470 (SLGL…RLVL), 472–489 (DVGH…LVNC), and 490–515 (TTLK…ALTR). N-linked (GlcNAc...) asparagine glycans are attached at residues N431, N442, N454, N488, and N503. Residues 516-536 (LEIIVLRSNRFHGPISSPEVS) form an LRR 18; degenerate repeat. LRR repeat units lie at residues 539 to 563 (FTAL…YFAN), 614 to 637 (DTYT…IGDL), 638 to 661 (KSLI…LAKL), 662 to 685 (KQLE…LREL), and 687 to 709 (FLGY…TQVG). N553 and N563 each carry an N-linked (GlcNAc...) asparagine glycan. N-linked (GlcNAc...) asparagine glycosylation is present at N647. N692 carries an N-linked (GlcNAc...) asparagine glycan. The chain crosses the membrane as a helical span at residues 759-779 (AAAIGYGPGVLFGLAIGQAFA). Topologically, residues 780–792 (RYKPVLFYKLFRL) are cytoplasmic.

Belongs to the RLP family.

It is found in the cell membrane. This Arabidopsis thaliana (Mouse-ear cress) protein is Receptor-like protein 54.